Reading from the N-terminus, the 239-residue chain is Ribosomal RNA large subunit methyltransferase E (239 aa).

Residues 1 to 20 form a disordered region; it reads MTKAPIAGNRTGRKLGQRVK. The segment covering 11–20 has biased composition (basic residues); the sequence is TGRKLGQRVK. Positions 81, 83, 104, 120, and 144 each coordinate S-adenosyl-L-methionine. Lysine 184 acts as the Proton acceptor in catalysis.

It belongs to the class I-like SAM-binding methyltransferase superfamily. RNA methyltransferase RlmE family.

The protein localises to the cytoplasm. The enzyme catalyses uridine(2552) in 23S rRNA + S-adenosyl-L-methionine = 2'-O-methyluridine(2552) in 23S rRNA + S-adenosyl-L-homocysteine + H(+). In terms of biological role, specifically methylates the uridine in position 2552 of 23S rRNA at the 2'-O position of the ribose in the fully assembled 50S ribosomal subunit. This chain is Ribosomal RNA large subunit methyltransferase E, found in Rhizobium etli (strain ATCC 51251 / DSM 11541 / JCM 21823 / NBRC 15573 / CFN 42).